The primary structure comprises 146 residues: Protein MGF 100-3L (146 aa).

This sequence belongs to the asfivirus MGF 100 family.

In terms of biological role, plays a role in virus cell tropism, and may be required for efficient virus replication in macrophages. In Ornithodoros (relapsing fever ticks), this protein is Protein MGF 100-3L.